We begin with the raw amino-acid sequence, 200 residues long: Holliday junction branch migration complex subunit RuvA (200 aa).

The segment at 1–63 (MIASVRGVVT…EDSLTLYGFA (63 aa)) is domain I. Positions 64–142 (DDDAKALFEL…PVPVGADSAA (79 aa)) are domain II. Positions 143–151 (GVTTGAWPE) are flexible linker. Positions 151 to 200 (EQVRQALVGLGWTAAQADQAVTAVAETVDGAVPPVPVLLRQAIRLLGRTR) are domain III.

This sequence belongs to the RuvA family. In terms of assembly, homotetramer. Forms an RuvA(8)-RuvB(12)-Holliday junction (HJ) complex. HJ DNA is sandwiched between 2 RuvA tetramers; dsDNA enters through RuvA and exits via RuvB. An RuvB hexamer assembles on each DNA strand where it exits the tetramer. Each RuvB hexamer is contacted by two RuvA subunits (via domain III) on 2 adjacent RuvB subunits; this complex drives branch migration. In the full resolvosome a probable DNA-RuvA(4)-RuvB(12)-RuvC(2) complex forms which resolves the HJ.

Its subcellular location is the cytoplasm. The RuvA-RuvB-RuvC complex processes Holliday junction (HJ) DNA during genetic recombination and DNA repair, while the RuvA-RuvB complex plays an important role in the rescue of blocked DNA replication forks via replication fork reversal (RFR). RuvA specifically binds to HJ cruciform DNA, conferring on it an open structure. The RuvB hexamer acts as an ATP-dependent pump, pulling dsDNA into and through the RuvAB complex. HJ branch migration allows RuvC to scan DNA until it finds its consensus sequence, where it cleaves and resolves the cruciform DNA. The polypeptide is Holliday junction branch migration complex subunit RuvA (Salinispora tropica (strain ATCC BAA-916 / DSM 44818 / JCM 13857 / NBRC 105044 / CNB-440)).